The primary structure comprises 397 residues: 8-amino-7-oxononanoate synthase (397 aa).

Arg21 lines the substrate pocket. 110–111 lines the pyridoxal 5'-phosphate pocket; the sequence is GY. His135 lines the substrate pocket. The pyridoxal 5'-phosphate site is built by Ser181, His209, and Thr238. Lys241 carries the N6-(pyridoxal phosphate)lysine modification. Thr355 is a binding site for substrate.

Belongs to the class-II pyridoxal-phosphate-dependent aminotransferase family. BioF subfamily. In terms of assembly, homodimer. Requires pyridoxal 5'-phosphate as cofactor.

The catalysed reaction is 6-carboxyhexanoyl-[ACP] + L-alanine + H(+) = (8S)-8-amino-7-oxononanoate + holo-[ACP] + CO2. The protein operates within cofactor biosynthesis; biotin biosynthesis. Its function is as follows. Catalyzes the decarboxylative condensation of pimeloyl-[acyl-carrier protein] and L-alanine to produce 8-amino-7-oxononanoate (AON), [acyl-carrier protein], and carbon dioxide. The sequence is that of 8-amino-7-oxononanoate synthase from Saccharophagus degradans (strain 2-40 / ATCC 43961 / DSM 17024).